Reading from the N-terminus, the 475-residue chain is Trifunctional enzyme subunit beta, mitochondrial (475 aa).

The N-terminal 34 residues, 1–34, are a transit peptide targeting the mitochondrion; that stretch reads MTTILTSTFRNLSTTSKWALRFSVRPLSCSSQVQ. K53 is modified (N6-succinyllysine). An N6-acetyllysine; alternate modification is found at K73. K73 is modified (N6-succinyllysine; alternate). Catalysis depends on C139, which acts as the Acyl-thioester intermediate. Residues 174-221 lie within the membrane without spanning it; the sequence is IRHSRNMRKMMLDLNKAKTLAQRLSLLTKFRLNFLSPELPAVAEFSTN. Residue K189 is modified to N6-acetyllysine; alternate. K189 carries the N6-succinyllysine; alternate modification. Residues K191, K273, and K292 each carry the N6-succinyllysine modification. K294 carries the post-translational modification N6-acetyllysine; alternate. K294 carries the post-translational modification N6-succinyllysine; alternate. Position 299 is an N6-acetyllysine (K299). K333 is subject to N6-acetyllysine; alternate. At K333 the chain carries N6-succinyllysine; alternate. Residues K349 and K362 each carry the N6-acetyllysine modification. Catalysis depends on C459, which acts as the Proton donor/acceptor.

This sequence belongs to the thiolase-like superfamily. Thiolase family. Heterotetramer of 2 alpha/HADHA and 2 beta/HADHB subunits; forms the mitochondrial trifunctional enzyme. Also purified as higher order heterooligomers including a 4 alpha/HADHA and 4 beta/HADHB heterooligomer which physiological significance remains unclear. The mitochondrial trifunctional enzyme interacts with MTLN. Interacts with RSAD2/viperin.

It localises to the mitochondrion. The protein resides in the mitochondrion inner membrane. It is found in the mitochondrion outer membrane. The protein localises to the endoplasmic reticulum. It carries out the reaction an acyl-CoA + acetyl-CoA = a 3-oxoacyl-CoA + CoA. The catalysed reaction is butanoyl-CoA + acetyl-CoA = 3-oxohexanoyl-CoA + CoA. The enzyme catalyses hexanoyl-CoA + acetyl-CoA = 3-oxooctanoyl-CoA + CoA. It catalyses the reaction octanoyl-CoA + acetyl-CoA = 3-oxodecanoyl-CoA + CoA. It carries out the reaction decanoyl-CoA + acetyl-CoA = 3-oxododecanoyl-CoA + CoA. The catalysed reaction is dodecanoyl-CoA + acetyl-CoA = 3-oxotetradecanoyl-CoA + CoA. The enzyme catalyses tetradecanoyl-CoA + acetyl-CoA = 3-oxohexadecanoyl-CoA + CoA. Its pathway is lipid metabolism; fatty acid beta-oxidation. Mitochondrial trifunctional enzyme catalyzes the last three of the four reactions of the mitochondrial beta-oxidation pathway. The mitochondrial beta-oxidation pathway is the major energy-producing process in tissues and is performed through four consecutive reactions breaking down fatty acids into acetyl-CoA. Among the enzymes involved in this pathway, the trifunctional enzyme exhibits specificity for long-chain fatty acids. Mitochondrial trifunctional enzyme is a heterotetrameric complex composed of two proteins, the trifunctional enzyme subunit alpha/HADHA carries the 2,3-enoyl-CoA hydratase and the 3-hydroxyacyl-CoA dehydrogenase activities, while the trifunctional enzyme subunit beta/HADHB described here bears the 3-ketoacyl-CoA thiolase activity. This is Trifunctional enzyme subunit beta, mitochondrial (Hadhb) from Rattus norvegicus (Rat).